An 86-amino-acid chain; its full sequence is Exodeoxyribonuclease 7 small subunit (86 aa).

It belongs to the XseB family. As to quaternary structure, heterooligomer composed of large and small subunits.

The protein localises to the cytoplasm. The catalysed reaction is Exonucleolytic cleavage in either 5'- to 3'- or 3'- to 5'-direction to yield nucleoside 5'-phosphates.. Functionally, bidirectionally degrades single-stranded DNA into large acid-insoluble oligonucleotides, which are then degraded further into small acid-soluble oligonucleotides. The protein is Exodeoxyribonuclease 7 small subunit of Agrobacterium fabrum (strain C58 / ATCC 33970) (Agrobacterium tumefaciens (strain C58)).